The sequence spans 442 residues: Chromosomal replication initiator protein DnaA (442 aa).

Positions 1-84 (MSVLWSHCIS…LEIGSRAAEA (84 aa)) are domain I, interacts with DnaA modulators. The interval 84–105 (AAQMRSANPPRKTAPARKQVPN) is domain II. The interval 106–322 (NLNSAFIFGN…GALRRVIANA (217 aa)) is domain III, AAA+ region. Residues G150, G152, K153, and T154 each contribute to the ATP site. Residues 323 to 442 (QFTGRPITLE…FSNLLRILSN (120 aa)) form a domain IV, binds dsDNA region.

It belongs to the DnaA family. In terms of assembly, oligomerizes as a right-handed, spiral filament on DNA at oriC.

It is found in the cytoplasm. In terms of biological role, plays an essential role in the initiation and regulation of chromosomal replication. ATP-DnaA binds to the origin of replication (oriC) to initiate formation of the DNA replication initiation complex once per cell cycle. Binds the DnaA box (a 9 base pair repeat at the origin) and separates the double-stranded (ds)DNA. Forms a right-handed helical filament on oriC DNA; dsDNA binds to the exterior of the filament while single-stranded (ss)DNA is stabiized in the filament's interior. The ATP-DnaA-oriC complex binds and stabilizes one strand of the AT-rich DNA unwinding element (DUE), permitting loading of DNA polymerase. After initiation quickly degrades to an ADP-DnaA complex that is not apt for DNA replication. Binds acidic phospholipids. The polypeptide is Chromosomal replication initiator protein DnaA (Methylococcus capsulatus (strain ATCC 33009 / NCIMB 11132 / Bath)).